The following is a 118-amino-acid chain: uncharacterized protein (118 aa).

Positions 49-80 (SKEEHTTSAANLHPRKKKRMPPRRAEKNKAPN) are disordered. Positions 61–70 (HPRKKKRMPP) are enriched in basic residues.

This is an uncharacterized protein from Saccharomyces cerevisiae (strain ATCC 204508 / S288c) (Baker's yeast).